Reading from the N-terminus, the 379-residue chain is uncharacterized protein (379 aa).

This is an uncharacterized protein from Shouchella clausii (Alkalihalobacillus clausii).